Consider the following 195-residue polypeptide: Glycerol-3-phosphate acyltransferase 2 (195 aa).

The next 6 helical transmembrane spans lie at 4–24 (VVSL…VAGV), 52–72 (GAAA…VGLA), 73–93 (LWLA…GVVF), 115–135 (AMLV…LALI), 150–170 (AIPF…SRLG), and 171–191 (GGAE…HLLA).

The protein belongs to the PlsY family. Probably interacts with PlsX.

It is found in the cell membrane. It carries out the reaction an acyl phosphate + sn-glycerol 3-phosphate = a 1-acyl-sn-glycero-3-phosphate + phosphate. The protein operates within lipid metabolism; phospholipid metabolism. Its function is as follows. Catalyzes the transfer of an acyl group from acyl-phosphate (acyl-PO(4)) to glycerol-3-phosphate (G3P) to form lysophosphatidic acid (LPA). This enzyme utilizes acyl-phosphate as fatty acyl donor, but not acyl-CoA or acyl-ACP. The protein is Glycerol-3-phosphate acyltransferase 2 of Deinococcus radiodurans (strain ATCC 13939 / DSM 20539 / JCM 16871 / CCUG 27074 / LMG 4051 / NBRC 15346 / NCIMB 9279 / VKM B-1422 / R1).